The chain runs to 368 residues: E3 ubiquitin-protein ligase ATL31 (368 aa).

Residues 1–23 (MDPIKHISLPVLVLFLLLSVSAG) form the signal peptide. The chain crosses the membrane as a helical span at residues 46 to 66 (AVVVVVVIAALFFMGFFTVYI). The RING-type; atypical zinc-finger motif lies at 124–166 (CAICLNEFEDDETLRLLPKCDHVFHPHCIGAWLQGHVTCPVCR). Phosphoserine is present on Ser247. Residues 342 to 368 (NKDGEGTSSVQHIGTVGSTSGSLRLPV) are disordered. The span at 347–368 (GTSSVQHIGTVGSTSGSLRLPV) shows a compositional bias: polar residues.

This sequence belongs to the RING-type zinc finger family. ATL subfamily.

The protein localises to the membrane. It catalyses the reaction S-ubiquitinyl-[E2 ubiquitin-conjugating enzyme]-L-cysteine + [acceptor protein]-L-lysine = [E2 ubiquitin-conjugating enzyme]-L-cysteine + N(6)-ubiquitinyl-[acceptor protein]-L-lysine.. It functions in the pathway protein modification; protein ubiquitination. In terms of biological role, E3 ubiquitin-protein ligase that is required for the plant C/N response during seedling growth transition. May be involved in the early steps of the plant defense signaling pathway. The sequence is that of E3 ubiquitin-protein ligase ATL31 (ATL31) from Arabidopsis thaliana (Mouse-ear cress).